Here is a 316-residue protein sequence, read N- to C-terminus: Olfactory receptor 56B2 (316 aa).

Residues 1–32 (MVLQELRDSNSSKFQVSEFILMGFPGIHSWQH) lie on the Extracellular side of the membrane. Residue Asn10 is glycosylated (N-linked (GlcNAc...) asparagine). The helical transmembrane segment at 33–53 (WLSLPLALLYLLALSANILIL) threads the bilayer. The Cytoplasmic portion of the chain corresponds to 54 to 61 (IIINKEAA). The chain crosses the membrane as a helical span at residues 62 to 82 (LHQPMYYFLGILAMADIGLAT). Topologically, residues 83–106 (TIMPKILAILWFNAKTISLLECFA) are extracellular. Cys104 and Cys196 are disulfide-bonded. The chain crosses the membrane as a helical span at residues 107–127 (QMYAIHCFVAMESSTFVCMAI). Residues 128–146 (DRYVAICRPLRYPSIITES) are Cytoplasmic-facing. The chain crosses the membrane as a helical span at residues 147 to 167 (FVFKANGFMALRNSLCLISVP). At 168–203 (LLAAQRHYCSQNQIEHCLCSNLGVTSLSCDDRRINS) the chain is on the extracellular side. The helical transmembrane segment at 204–224 (INQVLLAWTLMGSDLGLIILS) threads the bilayer. Over 225-244 (YALILYSVLKLNSPEAASKA) the chain is Cytoplasmic. A helical membrane pass occupies residues 245 to 265 (LSTCTSHLILILFFYTVIIVI). Residues 266 to 279 (SITRSTGMRVPLIP) are Extracellular-facing. A helical transmembrane segment spans residues 280–300 (VLLNVLHNVIPPALNPMVYAL). Residues 301-316 (KNKELRQGLYKVLRLE) are Cytoplasmic-facing.

Belongs to the G-protein coupled receptor 1 family.

It is found in the cell membrane. In terms of biological role, odorant receptor. This Homo sapiens (Human) protein is Olfactory receptor 56B2.